Consider the following 238-residue polypeptide: MIEILHEYWKPLLWTDGYRFTGVAITLWLLILSVVIGGVLALFLAIGRVSSNKYIQFPIWLFTYIFRGTPLYVQLLVFYSGMYTLEIVKGTEFLNAFFRSGLNCTVLALTLNTCAYTTEIFAGAIRSVPHGEIEAARAYGFSTFKMYRCIILPSALRIALPAYSNEVILMLHSTALAFTATVPDLLKIARDINAATYQPFTAFGIAAVLYLIISYVLISLFRRAEKRWLQHVKPSSTH.

The Periplasmic segment spans residues 1–26 (MIEILHEYWKPLLWTDGYRFTGVAIT). Positions 23-221 (VAITLWLLIL…IISYVLISLF (199 aa)) constitute an ABC transmembrane type-1 domain. Residues 27 to 47 (LWLLILSVVIGGVLALFLAIG) form a helical membrane-spanning segment. The Cytoplasmic segment spans residues 48-58 (RVSSNKYIQFP). Residues 59–79 (IWLFTYIFRGTPLYVQLLVFY) form a helical membrane-spanning segment. The Periplasmic portion of the chain corresponds to 80-104 (SGMYTLEIVKGTEFLNAFFRSGLNC). A helical membrane pass occupies residues 105 to 125 (TVLALTLNTCAYTTEIFAGAI). Topologically, residues 126-157 (RSVPHGEIEAARAYGFSTFKMYRCIILPSALR) are cytoplasmic. A helical membrane pass occupies residues 158-178 (IALPAYSNEVILMLHSTALAF). The Periplasmic portion of the chain corresponds to 179–199 (TATVPDLLKIARDINAATYQP). Residues 200–220 (FTAFGIAAVLYLIISYVLISL) form a helical membrane-spanning segment. Over 221-238 (FRRAEKRWLQHVKPSSTH) the chain is Cytoplasmic.

This sequence belongs to the binding-protein-dependent transport system permease family. HisMQ subfamily. In terms of assembly, the HisPMQJ complex is composed of two ATP-binding proteins (HisP), two transmembrane proteins (HisM and HisQ) and a solute-binding protein (HisJ). The HisPMQ-ArgT complex is composed of two ATP-binding proteins (HisP), two transmembrane proteins (HisM and HisQ) and a solute-binding protein (ArgT).

It localises to the cell inner membrane. Functionally, part of the ABC transporter complex HisPMQJ involved in histidine transport. Is also part of the ABC transporter complex HisPMQ-ArgT involved in lysine/arginine/ornithine transport. Probably responsible for the translocation of the substrate across the membrane. This Escherichia coli O157:H7 protein is Histidine/lysine/arginine/ornithine transport system permease protein HisM (hisM).